A 228-amino-acid chain; its full sequence is Urease accessory protein UreF (228 aa).

It belongs to the UreF family. In terms of assembly, ureD, UreF and UreG form a complex that acts as a GTP-hydrolysis-dependent molecular chaperone, activating the urease apoprotein by helping to assemble the nickel containing metallocenter of UreC. The UreE protein probably delivers the nickel.

It is found in the cytoplasm. Its function is as follows. Required for maturation of urease via the functional incorporation of the urease nickel metallocenter. The polypeptide is Urease accessory protein UreF (Prochlorococcus marinus (strain MIT 9301)).